The following is a 94-amino-acid chain: Acylphosphatase (94 aa).

The Acylphosphatase-like domain occupies 8–94 (TVHVIVKGKV…EKRYKHFAQL (87 aa)). Residues Arg23 and Asn41 contribute to the active site.

It belongs to the acylphosphatase family.

The catalysed reaction is an acyl phosphate + H2O = a carboxylate + phosphate + H(+). The protein is Acylphosphatase (acyP) of Bordetella parapertussis (strain 12822 / ATCC BAA-587 / NCTC 13253).